We begin with the raw amino-acid sequence, 230 residues long: Ribose-5-phosphate isomerase A (230 aa).

Substrate contacts are provided by residues 31-34 (TGST), 87-90 (DGAD), and 100-103 (KGGG). E109 functions as the Proton acceptor in the catalytic mechanism. K127 is a binding site for substrate.

This sequence belongs to the ribose 5-phosphate isomerase family. In terms of assembly, homodimer.

It carries out the reaction aldehydo-D-ribose 5-phosphate = D-ribulose 5-phosphate. It functions in the pathway carbohydrate degradation; pentose phosphate pathway; D-ribose 5-phosphate from D-ribulose 5-phosphate (non-oxidative stage): step 1/1. In terms of biological role, catalyzes the reversible conversion of ribose-5-phosphate to ribulose 5-phosphate. The sequence is that of Ribose-5-phosphate isomerase A from Lactobacillus delbrueckii subsp. bulgaricus (strain ATCC 11842 / DSM 20081 / BCRC 10696 / JCM 1002 / NBRC 13953 / NCIMB 11778 / NCTC 12712 / WDCM 00102 / Lb 14).